The chain runs to 160 residues: Cyclic pyranopterin monophosphate synthase (160 aa).

Substrate contacts are provided by residues 73 to 75 (LCH) and 110 to 111 (ME). Residue aspartate 125 is part of the active site.

Belongs to the MoaC family. Homohexamer; trimer of dimers.

It catalyses the reaction (8S)-3',8-cyclo-7,8-dihydroguanosine 5'-triphosphate = cyclic pyranopterin phosphate + diphosphate. It functions in the pathway cofactor biosynthesis; molybdopterin biosynthesis. Functionally, catalyzes the conversion of (8S)-3',8-cyclo-7,8-dihydroguanosine 5'-triphosphate to cyclic pyranopterin monophosphate (cPMP). In Pseudomonas aeruginosa (strain LESB58), this protein is Cyclic pyranopterin monophosphate synthase.